A 264-amino-acid polypeptide reads, in one-letter code: Small ribosomal subunit protein eS1B (264 aa).

Residues 233 to 264 are disordered; it reads GEGGGSGKPAADETGAKVERADGYEPPVQESV. Positions 242–255 are enriched in basic and acidic residues; the sequence is AADETGAKVERADG.

This sequence belongs to the eukaryotic ribosomal protein eS1 family. Component of the small ribosomal subunit. Mature ribosomes consist of a small (40S) and a large (60S) subunit. The 40S subunit contains about 33 different proteins and 1 molecule of RNA (18S). The 60S subunit contains about 49 different proteins and 3 molecules of RNA (28S, 5.8S and 5S). Part of the small subunit (SSU) processome, composed of more than 70 proteins and the RNA chaperone small nucleolar RNA (snoRNA) U3.

It localises to the cytoplasm. It is found in the nucleus. The protein resides in the nucleolus. Its function is as follows. Component of the small ribosomal subunit. The ribosome is a large ribonucleoprotein complex responsible for the synthesis of proteins in the cell. Part of the small subunit (SSU) processome, first precursor of the small eukaryotic ribosomal subunit. During the assembly of the SSU processome in the nucleolus, many ribosome biogenesis factors, an RNA chaperone and ribosomal proteins associate with the nascent pre-rRNA and work in concert to generate RNA folding, modifications, rearrangements and cleavage as well as targeted degradation of pre-ribosomal RNA by the RNA exosome. May play a role during erythropoiesis. This is Small ribosomal subunit protein eS1B (rps3a-b) from Xenopus laevis (African clawed frog).